Consider the following 513-residue polypeptide: Probable lipid II flippase MurJ (513 aa).

15 helical membrane passes run 3 to 23, 25 to 45, 83 to 103, 133 to 153, 162 to 182, 186 to 206, 221 to 241, 245 to 265, 271 to 291, 313 to 333, 354 to 374, 382 to 402, 405 to 425, 441 to 461, and 481 to 501; these read ILKSLISLSLITFISRILGFM, DLLIAYSFGASGITDAFFLAF, FISNILGLMIIILSLFTAFGI, IMFPYIFFVSLGSLTGSILNA, YSSIFLNLSMIMFISFVTAYF, ILSLAWAVIVGGVFQILYQFP, ILNLGVLKFLKQIGIVALGMS, VSIIIATISSSFLISGSISWI, LVEFISGIFGVSLSTILLPLL, LVCILVIPSIIILFTLSESLI, IEFYSIGLLPFVLIKILLAGF, TPMKISIFILVLTQLMNIFFI, FQYTSFALAISLASWINFFLL, WLRFLLKIFAAAMVMLILLFI, and LFYICASSGGGYLFTLFCLGL.

It belongs to the MurJ/MviN family.

It localises to the cell inner membrane. The protein operates within cell wall biogenesis; peptidoglycan biosynthesis. Involved in peptidoglycan biosynthesis. Transports lipid-linked peptidoglycan precursors from the inner to the outer leaflet of the cytoplasmic membrane. This chain is Probable lipid II flippase MurJ, found in Buchnera aphidicola subsp. Baizongia pistaciae (strain Bp).